The chain runs to 303 residues: N-acetyl-D-glucosamine kinase (303 aa).

Residues glycine 4 to lysine 11 and glycine 133 to phenylalanine 140 contribute to the ATP site. 4 residues coordinate Zn(2+): histidine 157, cysteine 177, cysteine 179, and cysteine 184.

Belongs to the ROK (NagC/XylR) family. NagK subfamily.

It catalyses the reaction N-acetyl-D-glucosamine + ATP = N-acetyl-D-glucosamine 6-phosphate + ADP + H(+). It functions in the pathway cell wall biogenesis; peptidoglycan recycling. Catalyzes the phosphorylation of N-acetyl-D-glucosamine (GlcNAc) derived from cell-wall degradation, yielding GlcNAc-6-P. This Escherichia coli O127:H6 (strain E2348/69 / EPEC) protein is N-acetyl-D-glucosamine kinase.